Here is a 446-residue protein sequence, read N- to C-terminus: tRNA-2-methylthio-N(6)-dimethylallyladenosine synthase (446 aa).

In terms of domain architecture, MTTase N-terminal spans 8 to 124 (KTYRVKSFGC…LPGMIDAAVA (117 aa)). [4Fe-4S] cluster contacts are provided by C17, C53, C87, C160, C164, and C167. One can recognise a Radical SAM core domain in the interval 146–378 (RKSAPSAFLT…QAALNRDQAA (233 aa)). Residues 381–442 (AGSVGRTCEV…PNSLAGQLLE (62 aa)) enclose the TRAM domain.

This sequence belongs to the methylthiotransferase family. MiaB subfamily. Monomer. Requires [4Fe-4S] cluster as cofactor.

Its subcellular location is the cytoplasm. The enzyme catalyses N(6)-dimethylallyladenosine(37) in tRNA + (sulfur carrier)-SH + AH2 + 2 S-adenosyl-L-methionine = 2-methylsulfanyl-N(6)-dimethylallyladenosine(37) in tRNA + (sulfur carrier)-H + 5'-deoxyadenosine + L-methionine + A + S-adenosyl-L-homocysteine + 2 H(+). Its function is as follows. Catalyzes the methylthiolation of N6-(dimethylallyl)adenosine (i(6)A), leading to the formation of 2-methylthio-N6-(dimethylallyl)adenosine (ms(2)i(6)A) at position 37 in tRNAs that read codons beginning with uridine. This Erythrobacter litoralis (strain HTCC2594) protein is tRNA-2-methylthio-N(6)-dimethylallyladenosine synthase.